Here is a 425-residue protein sequence, read N- to C-terminus: Glutamate-1-semialdehyde 2,1-aminomutase (425 aa).

Position 265 is an N6-(pyridoxal phosphate)lysine (K265).

Belongs to the class-III pyridoxal-phosphate-dependent aminotransferase family. HemL subfamily. Homodimer. Requires pyridoxal 5'-phosphate as cofactor.

Its subcellular location is the cytoplasm. It carries out the reaction (S)-4-amino-5-oxopentanoate = 5-aminolevulinate. The protein operates within porphyrin-containing compound metabolism; protoporphyrin-IX biosynthesis; 5-aminolevulinate from L-glutamyl-tRNA(Glu): step 2/2. In Laribacter hongkongensis (strain HLHK9), this protein is Glutamate-1-semialdehyde 2,1-aminomutase.